The chain runs to 701 residues: Elongation factor G 2 (701 aa).

The region spanning 8 to 290 (ERYRNIGISA…AVIDYLPSPA (283 aa)) is the tr-type G domain. Residues 17–24 (AHIDAGKT), 88–92 (DTPGH), and 142–145 (NKMD) contribute to the GTP site.

Belongs to the TRAFAC class translation factor GTPase superfamily. Classic translation factor GTPase family. EF-G/EF-2 subfamily.

It is found in the cytoplasm. Its function is as follows. Catalyzes the GTP-dependent ribosomal translocation step during translation elongation. During this step, the ribosome changes from the pre-translocational (PRE) to the post-translocational (POST) state as the newly formed A-site-bound peptidyl-tRNA and P-site-bound deacylated tRNA move to the P and E sites, respectively. Catalyzes the coordinated movement of the two tRNA molecules, the mRNA and conformational changes in the ribosome. The sequence is that of Elongation factor G 2 from Cupriavidus pinatubonensis (strain JMP 134 / LMG 1197) (Cupriavidus necator (strain JMP 134)).